Reading from the N-terminus, the 85-residue chain is Large ribosomal subunit protein bL27 (85 aa).

The tract at residues 1–20 (MATKKAGGSTRNGRDSEAKR) is disordered.

Belongs to the bacterial ribosomal protein bL27 family.

This is Large ribosomal subunit protein bL27 from Glaesserella parasuis serovar 5 (strain SH0165) (Haemophilus parasuis).